Here is a 610-residue protein sequence, read N- to C-terminus: Zinc metalloproteinase-disintegrin-like VAP1 (610 aa).

The signal sequence occupies residues 1–20 (MIQVLLVTISLAVFPYQGSS). Residues 21–189 (VILESGNVND…KKASQSNLTP (169 aa)) constitute a propeptide that is removed on maturation. Position 190 is a pyrrolidone carboxylic acid (Glu) (glutamate 190). The 197-residue stretch at 199–395 (KYVKLFLVAD…NMPQCILKKP (197 aa)) folds into the Peptidase M12B domain. Asparagine 218 carries an N-linked (GlcNAc...) asparagine glycan. Disulfide bonds link cysteine 310–cysteine 390, cysteine 350–cysteine 374, and cysteine 352–cysteine 357. Histidine 335 contributes to the Zn(2+) binding site. A Metal-binding motif is present at residues 335-346 (HEMGHNLGMDHD). Catalysis depends on glutamate 336, which acts as the Proton acceptor. Zn(2+) contacts are provided by histidine 339 and histidine 345. A Disintegrin domain is found at 403–488 (PAVCGNYFVE…AECTDRFQRN (86 aa)). Residues valine 405, asparagine 408, phenylalanine 410, glutamate 412, glutamate 415, and aspartate 418 each contribute to the Ca(2+) site. 14 disulfides stabilise this stretch: cysteine 406/cysteine 435, cysteine 417/cysteine 430, cysteine 419/cysteine 425, cysteine 429/cysteine 452, cysteine 443/cysteine 449, cysteine 448/cysteine 474, cysteine 461/cysteine 481, cysteine 468/cysteine 499, cysteine 492/cysteine 504, cysteine 511/cysteine 561, cysteine 526/cysteine 572, cysteine 539/cysteine 549, cysteine 556/cysteine 598, and cysteine 592/cysteine 603. The short motif at 467–469 (ECD) is the D/ECD-tripeptide element. Aspartate 469, methionine 470, aspartate 472, aspartate 483, and arginine 484 together coordinate Ca(2+).

This sequence belongs to the venom metalloproteinase (M12B) family. P-III subfamily. P-IIIc sub-subfamily. Homodimer; disulfide-linked. Requires Zn(2+) as cofactor. The N-terminus is blocked. Expressed by the venom gland.

Its subcellular location is the secreted. Its activity is regulated as follows. Inhibited by EDTA and EGTA, but not by PMSF. Zinc metalloprotease that has fibrinogenolytic and hemorrhagic activities. It induces apoptosis in vascular endothelial cells (VEC), without degrading extracellular matrix (it cannot cleave collagen) or inhibiting adhesion of VEC. VAP1-induced apoptosis is inhibited by antibodies for integrin alpha-3, alpha-6, beta-1 and CD9. Apoptosis is accompanied by severe cell fragmentation, which is controlled by caspases. The polypeptide is Zinc metalloproteinase-disintegrin-like VAP1 (Crotalus atrox (Western diamondback rattlesnake)).